Here is a 559-residue protein sequence, read N- to C-terminus: Potassium-transporting ATPase potassium-binding subunit (559 aa).

12 consecutive transmembrane segments (helical) span residues 5-25 (GFLL…PLGT), 63-83 (LLAI…LLML), 131-151 (VGLT…VFAL), 173-193 (ITLW…IQQG), 254-274 (VQML…GEVV), 282-302 (AILW…MWAE), 327-347 (FGIL…CGAV), 356-376 (ALGG…FGGV), 379-399 (GLYG…LMVG), 416-436 (MIAL…ALAM), 483-503 (LLLA…VMAI), and 525-545 (ALFI…TFIP).

It belongs to the KdpA family. In terms of assembly, the system is composed of three essential subunits: KdpA, KdpB and KdpC.

It is found in the cell inner membrane. In terms of biological role, part of the high-affinity ATP-driven potassium transport (or Kdp) system, which catalyzes the hydrolysis of ATP coupled with the electrogenic transport of potassium into the cytoplasm. This subunit binds the periplasmic potassium ions and delivers the ions to the membrane domain of KdpB through an intramembrane tunnel. In Klebsiella pneumoniae (strain 342), this protein is Potassium-transporting ATPase potassium-binding subunit.